We begin with the raw amino-acid sequence, 149 residues long: MGEHVIALNKKAKFNYEILETWEAGIELYGPEIKSIRNHEANIAEAFILIRKKEAFLINANIKKYDYANFVKGIDPLRTRKLLLHKKEINKILKRVMLEKLTIVPLRLYLKGNYAKLEIGLGRGKKIHDKRETIKKRDIERKEMRKYKY.

The protein belongs to the SmpB family.

It is found in the cytoplasm. Required for rescue of stalled ribosomes mediated by trans-translation. Binds to transfer-messenger RNA (tmRNA), required for stable association of tmRNA with ribosomes. tmRNA and SmpB together mimic tRNA shape, replacing the anticodon stem-loop with SmpB. tmRNA is encoded by the ssrA gene; the 2 termini fold to resemble tRNA(Ala) and it encodes a 'tag peptide', a short internal open reading frame. During trans-translation Ala-aminoacylated tmRNA acts like a tRNA, entering the A-site of stalled ribosomes, displacing the stalled mRNA. The ribosome then switches to translate the ORF on the tmRNA; the nascent peptide is terminated with the 'tag peptide' encoded by the tmRNA and targeted for degradation. The ribosome is freed to recommence translation, which seems to be the essential function of trans-translation. The protein is SsrA-binding protein of Mesoplasma florum (strain ATCC 33453 / NBRC 100688 / NCTC 11704 / L1) (Acholeplasma florum).